The primary structure comprises 202 residues: UMP-CMP kinase 3 (202 aa).

G24–T29 is a binding site for ATP. The NMP stretch occupies residues S44–V73. Residues R50, K71–V73, and G98–R101 each bind a ribonucleoside 5'-phosphate. N105 serves as a coordination point for CMP. An LID region spans residues G136–D144. R137 provides a ligand contact to ATP. Positions 141 and 152 each coordinate a ribonucleoside 5'-phosphate. K180 lines the ATP pocket.

As to quaternary structure, monomer. It depends on Mg(2+) as a cofactor.

The protein localises to the cytoplasm. Its subcellular location is the nucleus. The catalysed reaction is CMP + ATP = CDP + ADP. It catalyses the reaction dCMP + ATP = dCDP + ADP. The enzyme catalyses UMP + ATP = UDP + ADP. Its function is as follows. Catalyzes the phosphorylation of pyrimidine nucleoside monophosphates at the expense of ATP. Plays an important role in de novo pyrimidine nucleotide biosynthesis. Has preference for UMP and CMP as phosphate acceptors. Does not act on dCMP and dUMP. This Arabidopsis thaliana (Mouse-ear cress) protein is UMP-CMP kinase 3 (UMK3).